The sequence spans 466 residues: Chromosomal replication initiator protein DnaA (466 aa).

The tract at residues 1 to 77 (MSQEIWADVL…GAEHPQVEFQ (77 aa)) is domain I, interacts with DnaA modulators. The domain II stretch occupies residues 77–121 (QVLPAAQDALLLPNDPPPAPEAAAPTPKTKAAPTPPPSTPGDNRK). Residues 87–122 (LLPNDPPPAPEAAAPTPKTKAAPTPPPSTPGDNRKT) form a disordered region. The segment covering 97-108 (EAAAPTPKTKAA) has biased composition (low complexity). The interval 122-338 (TLNPKYTFEN…GALMRVVAFA (217 aa)) is domain III, AAA+ region. Positions 166, 168, 169, and 170 each coordinate ATP. Residues 339-466 (SLNNVPFSRA…GKEEEEEVGA (128 aa)) are domain IV, binds dsDNA.

Belongs to the DnaA family. As to quaternary structure, oligomerizes as a right-handed, spiral filament on DNA at oriC.

The protein resides in the cytoplasm. In terms of biological role, plays an essential role in the initiation and regulation of chromosomal replication. ATP-DnaA binds to the origin of replication (oriC) to initiate formation of the DNA replication initiation complex once per cell cycle. Binds the DnaA box (a 9 base pair repeat at the origin) and separates the double-stranded (ds)DNA. Forms a right-handed helical filament on oriC DNA; dsDNA binds to the exterior of the filament while single-stranded (ss)DNA is stabiized in the filament's interior. The ATP-DnaA-oriC complex binds and stabilizes one strand of the AT-rich DNA unwinding element (DUE), permitting loading of DNA polymerase. After initiation quickly degrades to an ADP-DnaA complex that is not apt for DNA replication. Binds acidic phospholipids. Functionally, strand separation requires the DnaA boxes and adjacent DnaA-trio motifs but works equally well with ADP or ATP. This chain is Chromosomal replication initiator protein DnaA, found in Deinococcus radiodurans (strain ATCC 13939 / DSM 20539 / JCM 16871 / CCUG 27074 / LMG 4051 / NBRC 15346 / NCIMB 9279 / VKM B-1422 / R1).